The chain runs to 377 residues: Prostaglandin E synthase 2 (377 aa).

At 1-65 (MAAACTRTLG…LAAPVRGSGR (65 aa)) the chain is on the lumenal side. Residues 66–83 (VLGCAFLLGGGFGLYQTI) form a helical membrane-spanning segment. Positions 105 to 182 (LKLTLYQYKT…ALKTYISSKD (78 aa)) constitute a GST N-terminal domain. Glutathione contacts are provided by residues Val-153 and 166 to 167 (DS). Residues 266–377 (YIVREGKFGS…RMQKATQHVS (112 aa)) enclose the GST C-terminal domain.

It belongs to the GST superfamily. In terms of assembly, homodimer.

The protein resides in the golgi apparatus membrane. The catalysed reaction is prostaglandin H2 = prostaglandin E2. The enzyme catalyses prostaglandin H2 = (12S)-hydroxy-(5Z,8E,10E)-heptadecatrienoate + malonaldehyde. It participates in lipid metabolism; prostaglandin biosynthesis. With respect to regulation, isomerase activity is increased by sulfhydril compounds. Dithiothreitol (DTT) is most effective, followed by glutathione (GSH) and 2-mercaptoethanol. Its function is as follows. Isomerase that catalyzes the conversion of PGH2 into the more stable prostaglandin E2 (PGE2) (in vitro). The biological function and the GSH-dependent property of PTGES2 is still under debate. In vivo, PTGES2 could form a complex with GSH and heme and would not participate in PGE2 synthesis but would catalyze the degradation of prostaglandin E2 H2 (PGH2) to 12(S)-hydroxy-5(Z),8(E),10(E)-heptadecatrienoic acid (HHT) and malondialdehyde (MDA). This Danio rerio (Zebrafish) protein is Prostaglandin E synthase 2 (ptges2).